The following is a 333-amino-acid chain: Holliday junction branch migration complex subunit RuvB (333 aa).

The large ATPase domain (RuvB-L) stretch occupies residues 1-182; sequence MDERLLSGES…FGVLSRLEYY (182 aa). ATP is bound by residues Leu21, Arg22, Gly63, Lys66, Thr67, Thr68, 129–131, Arg172, Tyr182, and Arg219; that span reads EDF. Thr67 serves as a coordination point for Mg(2+). A small ATPAse domain (RuvB-S) region spans residues 183 to 253; it reads TVDQLSAIVE…ITQMALELLQ (71 aa). Positions 256 to 333 are head domain (RuvB-H); sequence KLGLDHIDHK…EHFGMEMPKV (78 aa). 2 residues coordinate DNA: Arg311 and Arg316.

The protein belongs to the RuvB family. Homohexamer. Forms an RuvA(8)-RuvB(12)-Holliday junction (HJ) complex. HJ DNA is sandwiched between 2 RuvA tetramers; dsDNA enters through RuvA and exits via RuvB. An RuvB hexamer assembles on each DNA strand where it exits the tetramer. Each RuvB hexamer is contacted by two RuvA subunits (via domain III) on 2 adjacent RuvB subunits; this complex drives branch migration. In the full resolvosome a probable DNA-RuvA(4)-RuvB(12)-RuvC(2) complex forms which resolves the HJ.

The protein localises to the cytoplasm. The enzyme catalyses ATP + H2O = ADP + phosphate + H(+). In terms of biological role, the RuvA-RuvB-RuvC complex processes Holliday junction (HJ) DNA during genetic recombination and DNA repair, while the RuvA-RuvB complex plays an important role in the rescue of blocked DNA replication forks via replication fork reversal (RFR). RuvA specifically binds to HJ cruciform DNA, conferring on it an open structure. The RuvB hexamer acts as an ATP-dependent pump, pulling dsDNA into and through the RuvAB complex. RuvB forms 2 homohexamers on either side of HJ DNA bound by 1 or 2 RuvA tetramers; 4 subunits per hexamer contact DNA at a time. Coordinated motions by a converter formed by DNA-disengaged RuvB subunits stimulates ATP hydrolysis and nucleotide exchange. Immobilization of the converter enables RuvB to convert the ATP-contained energy into a lever motion, pulling 2 nucleotides of DNA out of the RuvA tetramer per ATP hydrolyzed, thus driving DNA branch migration. The RuvB motors rotate together with the DNA substrate, which together with the progressing nucleotide cycle form the mechanistic basis for DNA recombination by continuous HJ branch migration. Branch migration allows RuvC to scan DNA until it finds its consensus sequence, where it cleaves and resolves cruciform DNA. The sequence is that of Holliday junction branch migration complex subunit RuvB from Bacillus mycoides (strain KBAB4) (Bacillus weihenstephanensis).